A 125-amino-acid chain; its full sequence is Cu-Zn superoxide dismutase-like protein (125 aa).

Cysteines 52 and 102 form a disulfide.

It belongs to the Cu-Zn superoxide dismutase family.

The protein localises to the host cytoplasm. In terms of biological role, virion protein with no enzymatic activity. In Mus musculus (Mouse), this protein is Cu-Zn superoxide dismutase-like protein.